A 416-amino-acid polypeptide reads, in one-letter code: 46 kDa surface antigen (416 aa).

An N-terminal signal peptide occupies residues 1–27; the sequence is MLRKKFLYSSAIYATSLASIIAFVAAG. Cys-28 is lipidated: N-palmitoyl cysteine. Cys-28 carries S-diacylglycerol cysteine lipidation.

Its subcellular location is the cell membrane. In Mesomycoplasma hyopneumoniae (strain 232) (Mycoplasma hyopneumoniae), this protein is 46 kDa surface antigen (p46).